We begin with the raw amino-acid sequence, 805 residues long: Mediator of RNA polymerase II transcription subunit 25 (805 aa).

Disordered stretches follow at residues 308 to 332 and 647 to 691; these read NQMP…PQNT and QQPQ…NPQL. Residues 647–678 show a composition bias toward low complexity; it reads QQPQQAASQAPPQATQTTVQAPGQPQNPQPGA. The LXXLL motif motif lies at 691–695; sequence LRNLL.

Belongs to the Mediator complex subunit 25 family. As to quaternary structure, component of the Mediator complex.

The protein localises to the nucleus. Its function is as follows. Component of the Mediator complex, a coactivator involved in the regulated transcription of nearly all RNA polymerase II-dependent genes. Mediator functions as a bridge to convey information from gene-specific regulatory proteins to the basal RNA polymerase II transcription machinery. Mediator is recruited to promoters by direct interactions with regulatory proteins and serves as a scaffold for the assembly of a functional preinitiation complex with RNA polymerase II and the general transcription factors. In Xenopus tropicalis (Western clawed frog), this protein is Mediator of RNA polymerase II transcription subunit 25 (med25).